The chain runs to 334 residues: Transmembrane protein 41 homolog (334 aa).

Asn43 carries N-linked (GlcNAc...) asparagine glycosylation. The disordered stretch occupies residues 47-79 (KNKNNNIDNKKNSNNNNNNNNNNNNKNSISNNN). Asn83 carries N-linked (GlcNAc...) asparagine glycosylation. Helical transmembrane passes span 97–117 (LPLWLLVIVFGVSISVIVFLF), 156–176 (FIVITTFGVIYTFLQAFSIPG), 192–214 (VGFPLVCFVATLGATFSYLISYY), 246–266 (IVFLRITPFLPNWFINLASPL), 269–289 (VPIHTFAIGTFIGIMPATFLA), and 305–325 (IFDLKSILTMAALALLSILPT).

This sequence belongs to the TMEM41 family.

The protein resides in the membrane. The polypeptide is Transmembrane protein 41 homolog (Dictyostelium discoideum (Social amoeba)).